The following is a 139-amino-acid chain: D-ribose pyranase (139 aa).

The active-site Proton donor is histidine 20. Substrate is bound by residues aspartate 28, histidine 106, and tyrosine 128 to asparagine 130.

It belongs to the RbsD / FucU family. RbsD subfamily. In terms of assembly, homodecamer.

Its subcellular location is the cytoplasm. It carries out the reaction beta-D-ribopyranose = beta-D-ribofuranose. It participates in carbohydrate metabolism; D-ribose degradation; D-ribose 5-phosphate from beta-D-ribopyranose: step 1/2. Its function is as follows. Catalyzes the interconversion of beta-pyran and beta-furan forms of D-ribose. The protein is D-ribose pyranase of Salmonella choleraesuis (strain SC-B67).